A 294-amino-acid chain; its full sequence is dTDP-4-dehydrorhamnose reductase (294 aa).

NADH contacts are provided by residues 11 to 13, 38 to 39, and 62 to 64; these read GQL, DI, and AYT. NADPH-binding positions include 12–13, 38–39, and 62–64; these read QL, DI, and AYT. 103 to 104 provides a ligand contact to dTDP-beta-L-rhamnose; it reads TD. Positions 127 and 131 each coordinate NADH. Residues Tyr127 and Lys131 each contribute to the NADPH site. Tyr127 serves as the catalytic Proton donor/acceptor. A dTDP-beta-L-rhamnose-binding site is contributed by Trp152.

Belongs to the dTDP-4-dehydrorhamnose reductase family. In terms of assembly, homodimer. Mg(2+) serves as cofactor.

The catalysed reaction is dTDP-beta-L-rhamnose + NADP(+) = dTDP-4-dehydro-beta-L-rhamnose + NADPH + H(+). It participates in carbohydrate biosynthesis; dTDP-L-rhamnose biosynthesis. Its pathway is bacterial outer membrane biogenesis; LPS O-antigen biosynthesis. Functionally, involved in the biosynthesis of the dTDP-L-rhamnose which is an important component of lipopolysaccharide (LPS). Catalyzes the reduction of dTDP-6-deoxy-L-lyxo-4-hexulose to yield dTDP-L-rhamnose. This Aggregatibacter actinomycetemcomitans (Actinobacillus actinomycetemcomitans) protein is dTDP-4-dehydrorhamnose reductase.